Consider the following 764-residue polypeptide: Complement factor B (764 aa).

The N-terminal stretch at 1-25 (MGSNLSPQLCLMPFILGLLSGGVTT) is a signal peptide. Sushi domains are found at residues 35–100 (ESCS…ECRA), 101–160 (IHCP…ICDN), and 163–220 (GYCS…SCQD). 6 cysteine pairs are disulfide-bonded: C37/C76, C62/C98, C103/C145, C131/C158, C165/C205, and C191/C218. N122 and N142 each carry an N-linked (GlcNAc...) asparagine glycan. Positions 270–469 (NIYLVLDGSD…NLEDVFYQMI (200 aa)) constitute a VWFA domain. Residues S278 and S280 each contribute to the Mg(2+) site. The N-linked (GlcNAc...) asparagine glycan is linked to N285. T353 is a binding site for Mg(2+). N-linked (GlcNAc...) asparagine glycosylation is present at N378. Positions 477-757 (LCGMVWEHRK…VLPWLKEKLQ (281 aa)) constitute a Peptidase S1 domain. Disulfide bonds link C478-C596, C511-C527, C599-C615, C656-C682, and C695-C725. Residues H526 and D576 each act as charge relay system in the active site. The active-site Charge relay system is S699.

This sequence belongs to the peptidase S1 family. In terms of assembly, monomer. Interacts with complement C3b; this interaction is dependent on the presence of Mg(2+). As to quaternary structure, catalytic component of the C3 convertase of the alternative complement pathway, also named C3bBb, composed of complement factor B Bb and complement C3b. Catalytic component of the C5 convertase of the alternative complement pathway, also named C3bBb3b, composed of complement factor B Bb and additional molecules of complement C3b. Interacts to CFP; this interaction contributes to the stabilization of the active C3-convertase enzyme complex. Mg(2+) is required as a cofactor. Mn(2+) serves as cofactor. In terms of processing, cleaved by CFD following activation of the alternative complement system, generating Ba and Bb chains. Cleavage and activation takes place when CFB is already associated with complement C3b.

The protein localises to the secreted. Its subcellular location is the cell surface. The catalysed reaction is Cleavage of Arg-|-Ser bond in complement component C3 alpha-chain to yield C3a and C3b, and Arg-|-Xaa bond in complement component C5 alpha-chain to yield C5a and C5b.. Precursor of the catalytic component of the C3 and C5 convertase complexes of the alternative pathway of the complement system, a cascade of proteins that leads to phagocytosis and breakdown of pathogens and signaling that strengthens the adaptive immune system. The alternative complement pathway acts as an amplification loop that enhances other complement pathways (classical, lectin and GZMK) by promoting formation of additional C3 and C5 convertases. CFB is cleaved and activated by CFD to generate Ba and Bb chains; Bb chain constituting the catalytic component of the C3 and C5 convertases. In terms of biological role, serine protease component of the complement C3 and C5 convertase complexes of the alternative complement pathway. Following cleavage and activation by factor D (CFD), forms the C3 convertase together with complement C3b. As part of the C3 convertase, cleaves and activates C3 into C3a anaphylatoxin and C3b opsonin, the next components of the complement pathways. When an additional complement C3b molecule binds to the C3 convertase, forms the C5 convertase, which cleaves and activates C5 into C5a anaphylatoxin and C5b component of the membrane attack complex. Functionally, involved in proliferation and differentiation of preactivated B-lymphocytes, rapid spreading of peripheral blood monocytes, stimulation of lymphocyte blastogenesis and lysis of erythrocytes. The chain is Complement factor B (CFB) from Pan troglodytes (Chimpanzee).